A 199-amino-acid polypeptide reads, in one-letter code: Interleukin-11 (199 aa).

The first 21 residues, 1–21 (MNCVCRLVLVVLSLWPDRVVA), serve as a signal peptide directing secretion. The interval 182–190 (HLTLDWAVR) is important for interaction with IL11RA and for the stimulation of cell proliferation.

Belongs to the IL-6 superfamily. In terms of assembly, interacts with either IL11RA1 or IL11RA2 to associate with IL6ST, giving rise to a multimeric signaling complex.

The protein resides in the secreted. Its function is as follows. Cytokine that stimulates the proliferation of hematopoietic stem cells and megakaryocyte progenitor cells and induces megakaryocyte maturation resulting in increased platelet production. Also promotes the proliferation of hepatocytes in response to liver damage. Binding to its receptor formed by IL6ST and either IL11RA1 or IL11RA2 activates a signaling cascade that promotes cell proliferation, also in the context of various cancers. Signaling leads to the activation of intracellular protein kinases and the phosphorylation of STAT3. The interaction with the membrane-bound IL11RA and IL6ST stimulates 'classic signaling', whereas the binding of IL11 and soluble IL11RA to IL6ST stimulates 'trans-signaling'. The protein is Interleukin-11 of Mus musculus (Mouse).